The following is a 306-amino-acid chain: Curved DNA-binding protein (306 aa).

A J domain is found at 5–69; it reads DYYAIMGVKP…QRRAEYDQMW (65 aa).

Its subcellular location is the cytoplasm. The protein resides in the nucleoid. Its function is as follows. DNA-binding protein that preferentially recognizes a curved DNA sequence. It is probably a functional analog of DnaJ; displays overlapping activities with DnaJ, but functions under different conditions, probably acting as a molecular chaperone in an adaptive response to environmental stresses other than heat shock. Lacks autonomous chaperone activity; binds native substrates and targets them for recognition by DnaK. Its activity is inhibited by the binding of CbpM. The sequence is that of Curved DNA-binding protein from Escherichia coli O7:K1 (strain IAI39 / ExPEC).